Consider the following 446-residue polypeptide: D(1A) dopamine receptor (446 aa).

At 1 to 22 the chain is on the extracellular side; sequence MAPNTSTMDETGLPVERDFSFR. The N-linked (GlcNAc...) asparagine glycan is linked to Asn-4. A helical membrane pass occupies residues 23-48; the sequence is ILTACFLSLLILSTLLGNTLVCAAVI. At 49–59 the chain is on the cytoplasmic side; the sequence is RFRHLRSKVTN. Residues 60–86 traverse the membrane as a helical segment; that stretch reads FFVISLAVSDLLVAVLVMPWKAVAEIA. Residues 87–95 lie on the Extracellular side of the membrane; that stretch reads GFWPFGSFC. Cysteines 95 and 186 form a disulfide. The helical transmembrane segment at 96 to 118 threads the bilayer; it reads NIWVAFDIMCSTASILNLCVISV. Residues 119–137 lie on the Cytoplasmic side of the membrane; the sequence is DRYWAISSPFQYERKMTPK. A helical membrane pass occupies residues 138-162; that stretch reads AAFILISVAWTLSVLISFIPVQLSW. Over 163–192 the chain is Extracellular; that stretch reads HKAKPTWPLDGNFTSLEDAEDDNCDTRLSR. The chain crosses the membrane as a helical span at residues 193-218; the sequence is TYAISSSLISFYIPVAIMIVTYTSIY. The Cytoplasmic portion of the chain corresponds to 219–272; that stretch reads RIAQKQIRRISALERAAVHAKNCQTTTGNGNPVECSQSESSFKMSFKRETKVLK. A helical transmembrane segment spans residues 273-299; it reads TLSVIMGVFVCCWLPFFISNCMVPFCG. Residues 300–312 are Extracellular-facing; sequence SEETQPFCIDSIT. Residues 313 to 337 form a helical membrane-spanning segment; it reads FDVFVWFGWANSSLNPIIYAFNADF. The Cytoplasmic portion of the chain corresponds to 338–446; sequence QKAFSTLLGC…PVTHSGQHST (109 aa). Residues Cys-347 and Cys-351 are each lipidated (S-palmitoyl cysteine). At Ser-441 the chain carries Phosphoserine.

Belongs to the G-protein coupled receptor 1 family. As to quaternary structure, interacts with DNAJC14 via its C-terminus. Interacts with DRD2. Interacts with DORIP1.

It localises to the cell membrane. It is found in the endoplasmic reticulum membrane. The protein resides in the cell projection. The protein localises to the cilium membrane. Its subcellular location is the dendrite. It localises to the dendritic spine. In terms of biological role, dopamine receptor whose activity is mediated by G proteins which activate adenylyl cyclase. The sequence is that of D(1A) dopamine receptor (Drd1) from Mus musculus (Mouse).